A 2381-amino-acid polypeptide reads, in one-letter code: Protein Ycf2 (2381 aa).

1655-1662 lines the ATP pocket; it reads GPMETGRS.

The protein belongs to the Ycf2 family.

It localises to the plastid. It is found in the chloroplast stroma. Probable ATPase of unknown function. Its presence in a non-photosynthetic plant (Epifagus virginiana) and experiments in tobacco indicate that it has an essential function which is probably not related to photosynthesis. The protein is Protein Ycf2 of Angiopteris evecta (Mule's foot fern).